The following is a 377-amino-acid chain: Serine protease grass (377 aa).

The first 26 residues, 1 to 26 (MMIASSLAVLYGIAIVSSMGVQSARA), serve as a signal peptide directing secretion. The Clip domain maps to 31–89 (DCTTPDGDQGQCMPFSSCRTIEERLTEAQKAGQKVPADYASYLQKALCGEFNGVRHFCC). 6 cysteine pairs are disulfide-bonded: Cys32–Cys88, Cys42–Cys78, Cys48–Cys89, Cys111–Cys243, Cys148–Cys164, and Cys188–Cys197. The linker stretch occupies residues 91–118 (SANIQHNSKVMSLFKDENFDCGNFLSQR). Residues 119 to 373 (VSNGYEVKLS…YVQWITDTMA (255 aa)) enclose the Peptidase S1 domain. Catalysis depends on His163, which acts as the Charge relay system. Ca(2+) contacts are provided by Glu179, Arg181, Thr184, and Asp187. Asp223 serves as the catalytic Charge relay system. N-linked (GlcNAc...) asparagine glycosylation is found at Asn230 and Asn270. Cystine bridges form between Cys290–Cys304 and Cys314–Cys349. Residue Ser318 is the Charge relay system of the active site.

Belongs to the peptidase S1 family. CLIP subfamily. Post-translationally, proteolytically cleaved by a tryspin-like protease which is likely to activate grass.

The protein localises to the secreted. Its function is as follows. Endopeptidase. Plays a key role in innate immunity by activating the Toll pathway in response to fungal and Gram-positive bacterial infections, presumably downstream of pattern-recognition receptors (PRR), such as PGRP-SA, GNBP1 and GNBP3, and upstream of spz processing enzyme SPE. This is Serine protease grass from Drosophila melanogaster (Fruit fly).